We begin with the raw amino-acid sequence, 324 residues long: Phthalate 4,5-dioxygenase oxygenase reductase subunit (324 aa).

An FAD-binding FR-type domain is found at 9–111 (DGFTGLKVIA…ATPQNEFELI (103 aa)). 115-229 (RQFIFVAGGI…PGSIHFESFG (115 aa)) provides a ligand contact to NAD(+). Residues 241–324 (FSVTLGRSGI…ARNDVLVLDL (84 aa)) enclose the 2Fe-2S ferredoxin-type domain. Positions 275, 280, 283, and 311 each coordinate [2Fe-2S] cluster.

It belongs to the PDR/VanB family. In terms of assembly, this dioxygenase system consists of two proteins: phthalate oxygenase and phthalate oxygenase reductase. FMN is required as a cofactor.

The catalysed reaction is phthalate + NADH + O2 + H(+) = cis-4,5-dihydroxycyclohexa-2,6-diene-1,2-dicarboxylate + NAD(+). The protein operates within xenobiotic degradation; phthalate degradation; 3,4-dihydroxybenzoate from phthalate: step 1/3. The polypeptide is Phthalate 4,5-dioxygenase oxygenase reductase subunit (pht2) (Pseudomonas putida (Arthrobacter siderocapsulatus)).